The primary structure comprises 211 residues: MASTSTLLLPSLSSKNLHIAVPIRTNSFVRRTTKFSTKCSSNPESKDQFINLTPAPESINTTSAEKFPIEKRRRSEIIRDRTQRGIEKPEPPNFEIGWKRTKEINLEKPKGYVIMDFLEKFEALMAREFGSKELLAKAGEIVAERAREEAEVLRDEGKVEERMVTELFRVLKLMEMDLAMVKASVKDETLSQRIEQARARCRQAILVANSF.

The transit peptide at methionine 1–lysine 38 directs the protein to the chloroplast. A coiled-coil region spans residues alanine 136–methionine 163.

In terms of assembly, biogenesis factor component of the plastidial NDH subcomplex A.

It is found in the plastid. The protein resides in the chloroplast. It localises to the chloroplast stroma. In terms of biological role, required for both formation and activity of the chloroplast NAD(P)H dehydrogenase (NDH) complex of the photosynthetic electron transport chain. Functions in assembly or stabilization of the NDH complex; probably involved, together with NdhO and NdhH, in the formation of an NDH subcomplex A assembly intermediate (NAI500). This is Protein CHLORORESPIRATORY REDUCTION 41, chloroplastic from Arabidopsis thaliana (Mouse-ear cress).